The primary structure comprises 295 residues: Protein NEOXANTHIN-DEFICIENT 1 (295 aa).

A disordered region spans residues 221–251 (PAKVSGPSESDADKENSSEDQSSNVESVSRV).

Functionally, required for neoxanthin biosynthesis. Probably not involved directly in the enzymatic conversion of violaxanthin to neoxanthin. Is necessary but not sufficient for neoxanthin synthesis. Seems not required for abscisic acid (ABA) biosynthesis in response to drought stress. The sequence is that of Protein NEOXANTHIN-DEFICIENT 1 from Solanum lycopersicum (Tomato).